The following is a 124-amino-acid chain: uncharacterized protein (124 aa).

Residues 1-19 form the signal peptide; that stretch reads MRLLVQKVILIYLARYAKS. Helical transmembrane passes span 37–57 and 86–108; these read IAEF…GVKF and LGAL…IIII.

Its subcellular location is the membrane. This is an uncharacterized protein from Saccharomyces cerevisiae (strain ATCC 204508 / S288c) (Baker's yeast).